The primary structure comprises 206 residues: Large ribosomal subunit protein uL4 (206 aa).

The segment at 63-93 (MYKQKGTGRARHHSARAPQFRGGGKAHGPVV) is disordered. Positions 64–77 (YKQKGTGRARHHSA) are enriched in basic residues.

It belongs to the universal ribosomal protein uL4 family. In terms of assembly, part of the 50S ribosomal subunit.

Functionally, one of the primary rRNA binding proteins, this protein initially binds near the 5'-end of the 23S rRNA. It is important during the early stages of 50S assembly. It makes multiple contacts with different domains of the 23S rRNA in the assembled 50S subunit and ribosome. In terms of biological role, forms part of the polypeptide exit tunnel. This is Large ribosomal subunit protein uL4 from Rhizobium meliloti (strain 1021) (Ensifer meliloti).